The primary structure comprises 618 residues: Glucose starvation modulator protein 1 (618 aa).

Residues 20–48 (CEFCHTKHIQCDVGRPCQNCLKRNIGKFC) constitute a DNA-binding region (zn(2)-C6 fungal-type). Positions 325-352 (ANANTHPSHNAKLESECDSSSHSDADLE) are disordered. Basic and acidic residues predominate over residues 335–352 (AKLESECDSSSHSDADLE). The PAS domain maps to 466-538 (LLDLENMAKL…QIFNELLAFG (73 aa)).

The protein belongs to the ERT1/acuK family.

Its subcellular location is the nucleus. Transcription factor which regulates nonfermentable carbon utilization. Binds specifically to 5'-CGGN(8)CGG-3' and 5'-CGGN(9)CGG-3' sequences in the promoter region. In Saccharomyces cerevisiae (strain RM11-1a) (Baker's yeast), this protein is Glucose starvation modulator protein 1 (GSM1).